The sequence spans 491 residues: Glutamyl-tRNA(Gln) amidotransferase subunit A (491 aa).

Catalysis depends on charge relay system residues Lys-78 and Ser-158. The active-site Acyl-ester intermediate is Ser-182.

The protein belongs to the amidase family. GatA subfamily. As to quaternary structure, heterotrimer of A, B and C subunits.

The enzyme catalyses L-glutamyl-tRNA(Gln) + L-glutamine + ATP + H2O = L-glutaminyl-tRNA(Gln) + L-glutamate + ADP + phosphate + H(+). Allows the formation of correctly charged Gln-tRNA(Gln) through the transamidation of misacylated Glu-tRNA(Gln) in organisms which lack glutaminyl-tRNA synthetase. The reaction takes place in the presence of glutamine and ATP through an activated gamma-phospho-Glu-tRNA(Gln). In Nitrobacter winogradskyi (strain ATCC 25391 / DSM 10237 / CIP 104748 / NCIMB 11846 / Nb-255), this protein is Glutamyl-tRNA(Gln) amidotransferase subunit A.